Reading from the N-terminus, the 333-residue chain is Trans-1,2-dihydrobenzene-1,2-diol dehydrogenase (333 aa).

This sequence belongs to the Gfo/Idh/MocA family. Homodimer.

It carries out the reaction (1R,2R)-1,2-dihydrobenzene-1,2-diol + NADP(+) = catechol + NADPH + H(+). It catalyses the reaction D-xylose + NADP(+) = D-xylono-1,5-lactone + NADPH + H(+). The sequence is that of Trans-1,2-dihydrobenzene-1,2-diol dehydrogenase (Dhdh) from Mus musculus (Mouse).